A 164-amino-acid polypeptide reads, in one-letter code: Protein-export protein SecB (164 aa).

Positions 1 to 12 are enriched in basic and acidic residues; the sequence is MPDKDEITHDAQ. The tract at residues 1–22 is disordered; sequence MPDKDEITHDAQSENEESLPLA.

It belongs to the SecB family. Homotetramer, a dimer of dimers. One homotetramer interacts with 1 SecA dimer.

The protein resides in the cytoplasm. In terms of biological role, one of the proteins required for the normal export of preproteins out of the cell cytoplasm. It is a molecular chaperone that binds to a subset of precursor proteins, maintaining them in a translocation-competent state. It also specifically binds to its receptor SecA. The polypeptide is Protein-export protein SecB (Neorickettsia sennetsu (strain ATCC VR-367 / Miyayama) (Ehrlichia sennetsu)).